The following is a 342-amino-acid chain: L-threonine 3-dehydrogenase (342 aa).

Zn(2+) is bound at residue Cys38. Residues Thr40 and His43 each act as charge relay system in the active site. Zn(2+) is bound by residues His63, Glu64, Cys93, Cys96, Cys99, and Cys107. NAD(+) contacts are provided by residues Ile175, Asp195, Arg200, Leu262–Leu264, and Ile286–Tyr287.

Belongs to the zinc-containing alcohol dehydrogenase family. As to quaternary structure, homotetramer. Zn(2+) is required as a cofactor.

It localises to the cytoplasm. The catalysed reaction is L-threonine + NAD(+) = (2S)-2-amino-3-oxobutanoate + NADH + H(+). It functions in the pathway amino-acid degradation; L-threonine degradation via oxydo-reductase pathway; glycine from L-threonine: step 1/2. Catalyzes the NAD(+)-dependent oxidation of L-threonine to 2-amino-3-ketobutyrate. This is L-threonine 3-dehydrogenase from Streptomyces coelicolor (strain ATCC BAA-471 / A3(2) / M145).